Here is a 395-residue protein sequence, read N- to C-terminus: 1-deoxy-D-xylulose 5-phosphate reductoisomerase (395 aa).

Positions 15, 16, 17, 18, 41, 43, and 126 each coordinate NADPH. K127 is a binding site for 1-deoxy-D-xylulose 5-phosphate. E128 lines the NADPH pocket. D152 contacts Mn(2+). Positions 153, 154, 178, and 201 each coordinate 1-deoxy-D-xylulose 5-phosphate. E154 is a Mn(2+) binding site. G207 contacts NADPH. Residues S214, N219, K220, and E223 each contribute to the 1-deoxy-D-xylulose 5-phosphate site. E223 contacts Mn(2+).

This sequence belongs to the DXR family. The cofactor is Mg(2+). Mn(2+) is required as a cofactor.

It carries out the reaction 2-C-methyl-D-erythritol 4-phosphate + NADP(+) = 1-deoxy-D-xylulose 5-phosphate + NADPH + H(+). The protein operates within isoprenoid biosynthesis; isopentenyl diphosphate biosynthesis via DXP pathway; isopentenyl diphosphate from 1-deoxy-D-xylulose 5-phosphate: step 1/6. Catalyzes the NADPH-dependent rearrangement and reduction of 1-deoxy-D-xylulose-5-phosphate (DXP) to 2-C-methyl-D-erythritol 4-phosphate (MEP). The polypeptide is 1-deoxy-D-xylulose 5-phosphate reductoisomerase (Ruegeria sp. (strain TM1040) (Silicibacter sp.)).